A 306-amino-acid polypeptide reads, in one-letter code: 4-hydroxy-3-methylbut-2-enyl diphosphate reductase 1 (306 aa).

Cys-10 is a [4Fe-4S] cluster binding site. Residues His-39 and His-72 each contribute to the (2E)-4-hydroxy-3-methylbut-2-enyl diphosphate site. Dimethylallyl diphosphate is bound by residues His-39 and His-72. Isopentenyl diphosphate contacts are provided by His-39 and His-72. Cys-94 is a binding site for [4Fe-4S] cluster. His-122 contributes to the (2E)-4-hydroxy-3-methylbut-2-enyl diphosphate binding site. Position 122 (His-122) interacts with dimethylallyl diphosphate. His-122 contributes to the isopentenyl diphosphate binding site. Glu-124 (proton donor) is an active-site residue. Thr-162 is a binding site for (2E)-4-hydroxy-3-methylbut-2-enyl diphosphate. Cys-192 lines the [4Fe-4S] cluster pocket. 4 residues coordinate (2E)-4-hydroxy-3-methylbut-2-enyl diphosphate: Ser-220, Ser-221, Asn-222, and Ser-264. Positions 220, 221, 222, and 264 each coordinate dimethylallyl diphosphate. The isopentenyl diphosphate site is built by Ser-220, Ser-221, Asn-222, and Ser-264.

This sequence belongs to the IspH family. Requires [4Fe-4S] cluster as cofactor.

The catalysed reaction is isopentenyl diphosphate + 2 oxidized [2Fe-2S]-[ferredoxin] + H2O = (2E)-4-hydroxy-3-methylbut-2-enyl diphosphate + 2 reduced [2Fe-2S]-[ferredoxin] + 2 H(+). It carries out the reaction dimethylallyl diphosphate + 2 oxidized [2Fe-2S]-[ferredoxin] + H2O = (2E)-4-hydroxy-3-methylbut-2-enyl diphosphate + 2 reduced [2Fe-2S]-[ferredoxin] + 2 H(+). It functions in the pathway isoprenoid biosynthesis; dimethylallyl diphosphate biosynthesis; dimethylallyl diphosphate from (2E)-4-hydroxy-3-methylbutenyl diphosphate: step 1/1. Its pathway is isoprenoid biosynthesis; isopentenyl diphosphate biosynthesis via DXP pathway; isopentenyl diphosphate from 1-deoxy-D-xylulose 5-phosphate: step 6/6. Functionally, catalyzes the conversion of 1-hydroxy-2-methyl-2-(E)-butenyl 4-diphosphate (HMBPP) into a mixture of isopentenyl diphosphate (IPP) and dimethylallyl diphosphate (DMAPP). Acts in the terminal step of the DOXP/MEP pathway for isoprenoid precursor biosynthesis. The chain is 4-hydroxy-3-methylbut-2-enyl diphosphate reductase 1 from Rhodopseudomonas palustris (strain ATCC BAA-98 / CGA009).